The following is a 218-amino-acid chain: Guanylate kinase (218 aa).

Residues 15-194 enclose the Guanylate kinase-like domain; the sequence is GMMLVLSSPS…SIADVRAILR (180 aa). Residue 22-29 participates in ATP binding; sequence SPSGAGKT.

Belongs to the guanylate kinase family.

It localises to the cytoplasm. It catalyses the reaction GMP + ATP = GDP + ADP. In terms of biological role, essential for recycling GMP and indirectly, cGMP. This chain is Guanylate kinase, found in Rhodospirillum rubrum (strain ATCC 11170 / ATH 1.1.1 / DSM 467 / LMG 4362 / NCIMB 8255 / S1).